The sequence spans 754 residues: Cytosolic neutral trehalase (754 aa).

The segment covering 1–10 (MDGKVNNNPP) has biased composition (polar residues). 2 disordered regions span residues 1–47 (MDGK…LSKN) and 54–73 (TFSV…YTSP). Ca(2+) is bound by residues aspartate 117, aspartate 119, asparagine 121, glutamine 123, and aspartate 128. Residues arginine 305, 312-313 (WD), asparagine 349, 358-360 (RSQ), glutamate 427, arginine 476, and glycine 479 contribute to the substrate site. Catalysis depends on proton donor/acceptor residues aspartate 481 and glutamate 676.

The protein belongs to the glycosyl hydrolase 37 family. Requires Ca(2+) as cofactor.

The protein localises to the cytoplasm. It carries out the reaction alpha,alpha-trehalose + H2O = alpha-D-glucose + beta-D-glucose. The protein operates within carbohydrate degradation. Its function is as follows. Hydrolyzes intracellular trehalose to glucose. The disaccharide trehalose serves as a storage molecule for energy and carbohydrates that is mobilized during nutrient stress. This chain is Cytosolic neutral trehalase, found in Kluyveromyces lactis (strain ATCC 8585 / CBS 2359 / DSM 70799 / NBRC 1267 / NRRL Y-1140 / WM37) (Yeast).